Here is a 332-residue protein sequence, read N- to C-terminus: L-lactate dehydrogenase A chain (332 aa).

NAD(+)-binding positions include 29-57 (GMVG…MEDK) and Arg99. Substrate is bound by residues Arg106, Asn138, and Arg169. Residue Asn138 coordinates NAD(+). The active-site Proton acceptor is His193. Position 248 (Thr248) interacts with substrate.

This sequence belongs to the LDH/MDH superfamily. LDH family. As to quaternary structure, homotetramer.

It is found in the cytoplasm. It catalyses the reaction (S)-lactate + NAD(+) = pyruvate + NADH + H(+). It functions in the pathway fermentation; pyruvate fermentation to lactate; (S)-lactate from pyruvate: step 1/1. Functionally, interconverts simultaneously and stereospecifically pyruvate and lactate with concomitant interconversion of NADH and NAD(+). The sequence is that of L-lactate dehydrogenase A chain (ldha) from Sphyraena idiastes (Pelican barracuda).